We begin with the raw amino-acid sequence, 1090 residues long: Exoglucanase B (1090 aa).

The first 33 residues, 1-33 (MSSTTRRRSAWVAAATVGVSSFLAVAGITPAIA), serve as a signal peptide directing secretion. The propeptide occupies 34 to 53 (AAGAGQPATVTVPAASPVRA). A catalytic region spans residues 54-699 (AVDGEYAQRF…RLFDDGTTTP (646 aa)). Catalysis depends on D513, which acts as the Nucleophile. 3 Fibronectin type-III domains span residues 706-791 (VPTG…TKAT), 797-887 (APSV…TKSD), and 897-984 (VPAG…TKTP). The CBM2 domain maps to 983–1090 (TPQTGGSCSV…SFTLNGASCT (108 aa)). The cysteines at positions 990 and 1089 are disulfide-linked. A disordered region spans residues 1069–1090 (NGSHTGQNPNPASFTLNGASCT). Positions 1070-1090 (GSHTGQNPNPASFTLNGASCT) are enriched in polar residues.

The protein belongs to the glycosyl hydrolase 48 (cellulase L) family.

The catalysed reaction is Hydrolysis of (1-&gt;4)-beta-D-glucosidic linkages in cellulose and cellotetraose, releasing cellobiose from the non-reducing ends of the chains.. In terms of biological role, hydrolyzes cellohexaose to a mixture of cellotetraose, cellotriose and cellobiose, with only a trace of glucose. It hydrolyzed cellopentaose to cellotriose and cellobiose, and cellotetraose to cellobiose, but it did not hydrolyze cellotriose. Also has weak endoglucanase activity. Hydrolyzes glucosidic bonds with inversion of anomeric configuration. The sequence is that of Exoglucanase B (cbhB) from Cellulomonas fimi (strain ATCC 484 / DSM 20113 / JCM 1341 / CCUG 24087 / LMG 16345 / NBRC 15513 / NCIMB 8980 / NCTC 7547 / NRS-133).